The chain runs to 625 residues: Prothrombin (625 aa).

The N-terminal stretch at 1–24 is a signal peptide; the sequence is MARVRGPRLPGCLALAALFSLVHS. Residues 25 to 43 constitute a propeptide that is removed on maturation; that stretch reads QHVFLAHQQASSLLQRARR. One can recognise a Gla domain in the interval 44–90; sequence ANKGFLEEVRKGNLERECLEEPCSREEAFEALESLSATDAFWAKYTA. 4-carboxyglutamate occurs at positions 50, 51, 58, 60, 63, 64, 69, 70, 73, and 76. An intrachain disulfide couples Cys61 to Cys66. Cystine bridges form between Cys91-Cys104, Cys109-Cys187, Cys130-Cys170, Cys158-Cys182, Cys214-Cys292, Cys235-Cys275, Cys263-Cys287, Cys339-Cys485, Cys394-Cys410, Cys539-Cys553, and Cys567-Cys597. 2 consecutive Kringle domains span residues 109–187 and 214–292; these read CAEG…VPVC and CVPD…LNYC. Asn120 and Asn144 each carry an N-linked (GlcNAc...) asparagine glycan. The region spanning 367 to 621 is the Peptidase S1 domain; the sequence is IVEGQDAEVG…LKKWIQKVID (255 aa). His409 acts as the Charge relay system in catalysis. N-linked (GlcNAc...) asparagine glycosylation occurs at Asn419. Asp465 functions as the Charge relay system in the catalytic mechanism. The high affinity receptor-binding region which is also known as the TP508 peptide stretch occupies residues 554–576; that stretch reads AGYKPGEGKRGDACEGDSGGPFV. Residue Ser571 is the Charge relay system of the active site.

It belongs to the peptidase S1 family. Heterodimer (named alpha-thrombin) of a light and a heavy chain; disulfide-linked. Forms a heterodimer with SERPINA5. In plasma, interacts (via N-terminus) with alpha-1-microglobulin; this interaction does not prevent the activation of prothrombin to thrombin. The gamma-carboxyglutamyl residues, which bind calcium ions, result from the carboxylation of glutamyl residues by a microsomal enzyme, the vitamin K-dependent carboxylase. The modified residues are necessary for the calcium-dependent interaction with a negatively charged phospholipid surface, which is essential for the conversion of prothrombin to thrombin. In terms of processing, in the penultimate step of the coagulation cascade, prothrombin is converted to thrombin by the prothrombinase complex composed of factor Xa (F10), cofactor Va (F5), and phospholipids. This activation requires factor Xa-catalyzed sequential cleavage at 2 sites, Arg-317 and Arg-366, along 2 possible pathways. In the first pathway, the first cleavage occurs at Arg-317, leading to the formation of the inactive intermediate prethrombin-2. This pathway preferentially occurs on platelets and in the absence of cofactor Va. In the second pathway, the first cleavage occurs at Arg-366, which separates protease domain into 2 chains that remain connected through a disulfide bond and generates the active intermediate meizothrombin. The presence of cofactor Va directs activation along the meizothrombin pathway and greatly accelerates the rate of cleavage at Arg-366, but has a smaller effect on the cleavage of meizothrombin at Arg-317. Meizothrombin accumulates as an intermediate when prothrombinase is assembled on the membrane of red blood cells. As to expression, expressed by the liver and secreted in plasma.

It localises to the secreted. The protein localises to the extracellular space. It carries out the reaction Selective cleavage of Arg-|-Gly bonds in fibrinogen to form fibrin and release fibrinopeptides A and B.. Activity is promoted in the presence of negatively charged surfaces, such as polyphosphate and dextran sulfate. Inhibited by SERPINA5. Thrombin, which cleaves bonds after Arg and Lys, converts fibrinogen to fibrin and activates factors V, VII, VIII, XIII, and, in complex with thrombomodulin, protein C. Functions in blood homeostasis, inflammation and wound healing. Activates coagulation factor XI (F11); activation is promoted by the contact with negatively charged surfaces. Triggers the production of pro-inflammatory cytokines, such as MCP-1/CCL2 and IL8/CXCL8, in endothelial cells. This chain is Prothrombin (F2), found in Bos taurus (Bovine).